An 830-amino-acid polypeptide reads, in one-letter code: Histone acetyltransferase KAT2A (830 aa).

The interval 1–94 (MAEPSQAPNP…RKAQVRGLPR (94 aa)) is disordered. Ala-2 is modified (N-acetylalanine). 2 stretches are compositionally biased toward pro residues: residues 7-33 (APNPVPAAQPRPLHSPAPAPTSTPAPS) and 41-51 (APTPAPAPAPA). Residues 58-69 (TGSGGAGVGSGG) show a composition bias toward gly residues. Residues 83-94 (SQRKAQVRGLPR) are compositionally biased toward basic residues. Phosphoserine is present on Ser-302. Low complexity predominate over residues 398 to 417 (SFSPSMGGGSNSSLSLDSAG). The segment at 398 to 426 (SFSPSMGGGSNSSLSLDSAGTEPMPAGEK) is disordered. An N-acetyltransferase domain is found at 496–649 (VIGNSLTPKA…GATLMECELN (154 aa)). Position 542 is an N6-acetyllysine (Lys-542). The Proton donor/acceptor role is filled by Glu-568. Acetyl-CoA contacts are provided by residues 572–574 (CAV), 579–585 (QVKGYGT), and Tyr-610. Succinyl-CoA-binding positions include 572-574 (CAV), 579-585 (QVKGYGT), and Tyr-610. Lys-721 is covalently cross-linked (Glycyl lysine isopeptide (Lys-Gly) (interchain with G-Cter in SUMO2)). The Bromo domain occupies 721–825 (KDPDQLYTTL…KFFYFKLKEG (105 aa)). Position 728 is a phosphothreonine (Thr-728). Glycyl lysine isopeptide (Lys-Gly) (interchain with G-Cter in SUMO2) cross-links involve residues Lys-752 and Lys-784.

It belongs to the acetyltransferase family. GCN5 subfamily. In terms of assembly, interacts with EP300, CREBBP and ADA2. Component of the TFTC-HAT complex, at least composed of TAF5L, TAF6L, TAF3, TADA3L, SUPT3H/SPT3, TAF2/TAFII150, TAF4/TAFII135, TAF5/TAFII100, KAT2A/GCN5L2, TAF10 and TRRAP. Component of the STAGA transcription coactivator-HAT complex, at least composed of SUPT3H, KAT2A, SUPT7L, TAF5L, TAF6L, TADA3L, TAD1L, TAF10, TAF12, TRRAP and TAF9. The STAGA core complex is associated with a subcomplex required for histone deubiquitination composed of ATXN7L3, ENY2 and USP22. Component of the ADA2A-containing complex (ATAC), composed of KAT14, KAT2A, TADA2L, TADA3L, ZZ3, MBIP, WDR5, YEATS2, CCDC101 and DR1. In the complex, it probably interacts directly with KAT14, MBIP and WDR5. Interacts with PML. Interacts with CEBPB. Interacts with TACC1, TACC2 and TACC3. Interacts with RELA. Interacts with NFATC2. Interacts with TBX5. Interacts with PLK4. Associates with the 2-oxoglutarate dehydrogenase complex. Interacts with XPC; leading to KAT2A recruitment to promoters and subsequent acetylation of histones. Interacts with ERCC3/XPB; leading to KAT2A recruitment to promoters and subsequent acetylation of histones. Interacts with ISL1. Interactions of ISL1 with MLIP1 or KAT2A may be mutually exclusive. Post-translationally, acetylated at Lys-542, inhibiting the protein acetyltransferase activity. Deacetylation at Lys-542 by SIRT6 promotes phosphorylation at Ser-302 and Thr-728 and subsequent activation of the protein acetyltransferase activity, leading to acetylation and inactivation of PPARGC1A. In terms of tissue distribution, in brain, highly expressed in the hippocampal CA1 region (at protein level). Also expressed in the hippocampal subregions CA3 and the dentate gyrus as well as in the cortex and prefrontal cortex. Expressed at low level in the cerebellum.

The protein resides in the nucleus. It localises to the chromosome. The protein localises to the cytoplasm. It is found in the cytoskeleton. Its subcellular location is the microtubule organizing center. The protein resides in the centrosome. It catalyses the reaction L-lysyl-[histone] + acetyl-CoA = N(6)-acetyl-L-lysyl-[histone] + CoA + H(+). It carries out the reaction L-lysyl-[protein] + acetyl-CoA = N(6)-acetyl-L-lysyl-[protein] + CoA + H(+). The enzyme catalyses succinyl-CoA + L-lysyl-[protein] = N(6)-succinyl-L-lysyl-[protein] + CoA + H(+). The catalysed reaction is glutaryl-CoA + L-lysyl-[protein] = N(6)-glutaryl-L-lysyl-[protein] + CoA + H(+). Its function is as follows. Protein lysine acyltransferase that can act as a acetyltransferase, glutaryltransferase, succinyltransferase or malonyltransferase, depending on the context. Acts as a histone lysine succinyltransferase: catalyzes succinylation of histone H3 on 'Lys-79' (H3K79succ), with a maximum frequency around the transcription start sites of genes. Succinylation of histones gives a specific tag for epigenetic transcription activation. Association with the 2-oxoglutarate dehydrogenase complex, which provides succinyl-CoA, is required for histone succinylation. In different complexes, functions either as an acetyltransferase (HAT) or as a succinyltransferase: in the SAGA and ATAC complexes, acts as a histone acetyltransferase. Has significant histone acetyltransferase activity with core histones, but not with nucleosome core particles. Has a a strong preference for acetylation of H3 at 'Lys-9' (H3K9ac). Acetylation of histones gives a specific tag for epigenetic transcription activation. Recruited by the XPC complex at promoters, where it specifically mediates acetylation of histone variant H2A.Z.1/H2A.Z, thereby promoting expression of target genes. Involved in long-term memory consolidation and synaptic plasticity: acts by promoting expression of a hippocampal gene expression network linked to neuroactive receptor signaling. Acts as a positive regulator of T-cell activation: upon TCR stimulation, recruited to the IL2 promoter following interaction with NFATC2 and catalyzes acetylation of histone H3 at 'Lys-9' (H3K9ac), leading to promote IL2 expression. Required for growth and differentiation of craniofacial cartilage and bone by regulating acetylation of histone H3 at 'Lys-9' (H3K9ac). Regulates embryonic stem cell (ESC) pluripotency and differentiation. Also acetylates non-histone proteins, such as CEBPB, MRE11, PPARGC1A, PLK4 and TBX5. Involved in heart and limb development by mediating acetylation of TBX5, acetylation regulating nucleocytoplasmic shuttling of TBX5. Acts as a negative regulator of centrosome amplification by mediating acetylation of PLK4. Acts as a negative regulator of gluconeogenesis by mediating acetylation and subsequent inactivation of PPARGC1A. Also acts as a histone glutaryltransferase: catalyzes glutarylation of histone H4 on 'Lys-91' (H4K91glu), a mark that destabilizes nucleosomes by promoting dissociation of the H2A-H2B dimers from nucleosomes. The chain is Histone acetyltransferase KAT2A from Mus musculus (Mouse).